A 190-amino-acid polypeptide reads, in one-letter code: Xanthine phosphoribosyltransferase (190 aa).

The xanthine site is built by Leu20 and Asn27. Ala128–Ala132 contributes to the 5-phospho-alpha-D-ribose 1-diphosphate binding site. A xanthine-binding site is contributed by Lys156.

Belongs to the purine/pyrimidine phosphoribosyltransferase family. Xpt subfamily. Homodimer.

The protein resides in the cytoplasm. The catalysed reaction is XMP + diphosphate = xanthine + 5-phospho-alpha-D-ribose 1-diphosphate. It functions in the pathway purine metabolism; XMP biosynthesis via salvage pathway; XMP from xanthine: step 1/1. Functionally, converts the preformed base xanthine, a product of nucleic acid breakdown, to xanthosine 5'-monophosphate (XMP), so it can be reused for RNA or DNA synthesis. The polypeptide is Xanthine phosphoribosyltransferase (Pseudomonas aeruginosa (strain LESB58)).